The chain runs to 305 residues: NAD kinase 2 (305 aa).

Residue D78 is the Proton acceptor of the active site. NAD(+)-binding positions include 78-79 (DG), 152-153 (NE), D182, 193-198 (TAYSLS), and N251.

It belongs to the NAD kinase family. A divalent metal cation is required as a cofactor.

The protein localises to the cytoplasm. The enzyme catalyses NAD(+) + ATP = ADP + NADP(+) + H(+). Its function is as follows. Involved in the regulation of the intracellular balance of NAD and NADP, and is a key enzyme in the biosynthesis of NADP. Catalyzes specifically the phosphorylation on 2'-hydroxyl of the adenosine moiety of NAD to yield NADP. This is NAD kinase 2 from Trichormus variabilis (strain ATCC 29413 / PCC 7937) (Anabaena variabilis).